Here is a 244-residue protein sequence, read N- to C-terminus: Carboxy-S-adenosyl-L-methionine synthase (244 aa).

S-adenosyl-L-methionine is bound by residues Y41, 66 to 68, 91 to 92, N134, and R201; these read GCS and DN.

The protein belongs to the class I-like SAM-binding methyltransferase superfamily. Cx-SAM synthase family. As to quaternary structure, homodimer.

The catalysed reaction is prephenate + S-adenosyl-L-methionine = carboxy-S-adenosyl-L-methionine + 3-phenylpyruvate + H2O. In terms of biological role, catalyzes the conversion of S-adenosyl-L-methionine (SAM) to carboxy-S-adenosyl-L-methionine (Cx-SAM). The sequence is that of Carboxy-S-adenosyl-L-methionine synthase from Colwellia psychrerythraea (strain 34H / ATCC BAA-681) (Vibrio psychroerythus).